A 307-amino-acid polypeptide reads, in one-letter code: N-acetylmuramic acid 6-phosphate etherase 2 (307 aa).

Positions 62 to 225 (ITAAFKQGGR…TTASMIRLGK (164 aa)) constitute an SIS domain. The active-site Proton donor is the Glu-90. Glu-121 is an active-site residue.

This sequence belongs to the GCKR-like family. MurNAc-6-P etherase subfamily. As to quaternary structure, homodimer.

It catalyses the reaction N-acetyl-D-muramate 6-phosphate + H2O = N-acetyl-D-glucosamine 6-phosphate + (R)-lactate. Its pathway is amino-sugar metabolism; 1,6-anhydro-N-acetylmuramate degradation. It participates in amino-sugar metabolism; N-acetylmuramate degradation. The protein operates within cell wall biogenesis; peptidoglycan recycling. Specifically catalyzes the cleavage of the D-lactyl ether substituent of MurNAc 6-phosphate, producing GlcNAc 6-phosphate and D-lactate. Together with AnmK, is also required for the utilization of anhydro-N-acetylmuramic acid (anhMurNAc) either imported from the medium or derived from its own cell wall murein, and thus plays a role in cell wall recycling. This is N-acetylmuramic acid 6-phosphate etherase 2 from Vibrio cholerae serotype O1 (strain ATCC 39315 / El Tor Inaba N16961).